The primary structure comprises 218 residues: Thiopurine S-methyltransferase (218 aa).

S-adenosyl-L-methionine contacts are provided by Trp10, Leu45, Glu66, and Arg123.

This sequence belongs to the class I-like SAM-binding methyltransferase superfamily. TPMT family.

It is found in the cytoplasm. The catalysed reaction is S-adenosyl-L-methionine + a thiopurine = S-adenosyl-L-homocysteine + a thiopurine S-methylether.. The protein is Thiopurine S-methyltransferase of Shewanella sp. (strain ANA-3).